The sequence spans 527 residues: MSTTDRVTTPTPTVSGTDAPGPDASHCHLVVVGGGITGLAAAWQGMARGARVSVVESDDHFGGKVVTDRRDGFLVEQGPDSFVAYRPAALKLIEELGLSDQVIAPGGGRRVSLLSRGKLRPMPAGMGMVLPTRMWPFVTTTVLSWPDKIRAGLDLVIPRRLPDHDVAIGAFLRQRLGDGIVRRFADPMVGGIYGAGIDELSLDAVLPSLRDNERDHRSLMVASLAGGRASRRAARQRAAQNNAQQNSSHQNSTGQNNSAGTRGPAASPFRTLRGGLGQLIDALVDQLRAGGVELLVNTSVDLLGRDGVHLSDGRVLPADAVVLAGGVASSARLLRPQLPAAARALAQIPLASTTIVSLAWPVSAFDVAPDSQGWLEADAGPVSGLTASSIKFAGRAPDGSVLMRVFVPDKRGPLTDAPDDELLSAVIDHVRPLLGVHGEPGLTQITRWHKVMPKYTVGHLERAAVVDSTLAEQRPTWAVAGSALHGVGLPDCISDARHSADEVIDAALAATPSAPNRNAATDRTETR.

The span at 1–14 (MSTTDRVTTPTPTV) shows a compositional bias: low complexity. The disordered stretch occupies residues 1 to 23 (MSTTDRVTTPTPTVSGTDAPGPD). FAD contacts are provided by residues 33–38 (GGGITG), 56–57 (ES), Lys64, and 78–81 (GPDS). The disordered stretch occupies residues 231–267 (RRAARQRAAQNNAQQNSSHQNSTGQNNSAGTRGPAAS). Residues 236–252 (QRAAQNNAQQNSSHQNS) are compositionally biased toward low complexity. FAD is bound by residues Val300, Trp448, and 487-489 (VGL).

The protein belongs to the protoporphyrinogen/coproporphyrinogen oxidase family. Coproporphyrinogen III oxidase subfamily. Requires FAD as cofactor.

Its subcellular location is the cytoplasm. The catalysed reaction is coproporphyrinogen III + 3 O2 = coproporphyrin III + 3 H2O2. It participates in porphyrin-containing compound metabolism; protoheme biosynthesis. In terms of biological role, involved in coproporphyrin-dependent heme b biosynthesis. Catalyzes the oxidation of coproporphyrinogen III to coproporphyrin III. The protein is Coproporphyrinogen III oxidase of Propionibacterium freudenreichii subsp. freudenreichii.